Reading from the N-terminus, the 140-residue chain is Inner membrane protein YphA (140 aa).

Residues 1–13 are Cytoplasmic-facing; the sequence is MNTLRYFDFGAAR. The chain crosses the membrane as a helical span at residues 14–34; it reads PVLLLIARIAVVLIFIIFGFP. Over 35–56 the chain is Periplasmic; the sequence is KMMGFDGTVQYMASLGAPMPML. The chain crosses the membrane as a helical span at residues 57–77; sequence AAIIAVVMEVPAAILIVLGFF. The Cytoplasmic segment spans residues 78-79; it reads TR. A helical transmembrane segment spans residues 80-100; it reads PLAVLFIFYTLGTAVIGHHYW. Residues 101-116 are Periplasmic-facing; that stretch reads DMTGDAVGPNMINFWK. A helical transmembrane segment spans residues 117 to 137; sequence NVSIAGAFLLLAITGPGAISL. At 138–140 the chain is on the cytoplasmic side; that stretch reads DRR.

Belongs to the DoxX family.

Its subcellular location is the cell inner membrane. The protein is Inner membrane protein YphA (yphA) of Escherichia coli (strain K12).